The sequence spans 788 residues: Probable phosphoketolase 1 (788 aa).

Belongs to the XFP family. Thiamine diphosphate serves as cofactor.

In Lactiplantibacillus plantarum (strain ATCC BAA-793 / NCIMB 8826 / WCFS1) (Lactobacillus plantarum), this protein is Probable phosphoketolase 1.